The primary structure comprises 986 residues: LRR receptor-like serine/threonine-protein kinase ER2 (986 aa).

A signal peptide spans 1–21 (MTTTTTTRLLLAAILLAVAAA). The Extracellular segment spans residues 22–581 (DDDGQTLLEI…VQRSSVSRSA (560 aa)). N64 and N73 each carry an N-linked (GlcNAc...) asparagine glycan. 20 LRR repeats span residues 68–89 (AVAA…AIGN), 90–114 (LKSV…IGDC), 116–138 (SLKT…ISKL), 139–161 (KHLE…TLSQ), 162–186 (LPNL…IYWN), 188–210 (VLQY…MCQL), 211–233 (TGLW…TIGN), 234–259 (CTSF…GFLQ), 261–280 (ATLS…VIGL), 281–304 (MQAL…ILGN), 306–329 (TYTE…LGNM), 330–352 (STLH…ELGK), 354–377 (TGLF…ISSC), 379–401 (NLIS…LHKL), 402–425 (ESIT…LAKM), 427–449 (NLDT…IGSL), 450–472 (EHLL…EFGN), 473–498 (LRSI…GMLQ), 500–520 (LILL…LINC), and 521–545 (FSLN…NFSR). Residues N220 and N233 are each glycosylated (N-linked (GlcNAc...) asparagine). N-linked (GlcNAc...) asparagine glycosylation is found at N269, N304, and N328. N-linked (GlcNAc...) asparagine glycans are attached at residues N373, N391, and N408. N456 carries an N-linked (GlcNAc...) asparagine glycan. 3 N-linked (GlcNAc...) asparagine glycosylation sites follow: N509, N527, and N542. Residues 582-602 (ILGIAVAGLVILLMILAAACW) traverse the membrane as a helical segment. At 603-986 (PHWAQVPKDV…FGEVISQNTE (384 aa)) the chain is on the cytoplasmic side. The region spanning 653–934 (LSEKYIIGYG…YPDPPSKPAL (282 aa)) is the Protein kinase domain. ATP-binding positions include 659–667 (IGYGASSTV) and K681. D779 (proton acceptor) is an active-site residue.

It belongs to the protein kinase superfamily. Ser/Thr protein kinase family.

Its subcellular location is the cell membrane. It carries out the reaction L-seryl-[protein] + ATP = O-phospho-L-seryl-[protein] + ADP + H(+). It catalyses the reaction L-threonyl-[protein] + ATP = O-phospho-L-threonyl-[protein] + ADP + H(+). Its function is as follows. Receptor kinase that may be involved in the regulation of cell proliferation and cell growth. This Oryza sativa subsp. japonica (Rice) protein is LRR receptor-like serine/threonine-protein kinase ER2.